A 130-amino-acid polypeptide reads, in one-letter code: Ribosome-binding factor A (130 aa).

Belongs to the RbfA family. In terms of assembly, monomer. Binds 30S ribosomal subunits, but not 50S ribosomal subunits or 70S ribosomes.

Its subcellular location is the cytoplasm. In terms of biological role, one of several proteins that assist in the late maturation steps of the functional core of the 30S ribosomal subunit. Associates with free 30S ribosomal subunits (but not with 30S subunits that are part of 70S ribosomes or polysomes). Required for efficient processing of 16S rRNA. May interact with the 5'-terminal helix region of 16S rRNA. This Prochlorococcus marinus (strain AS9601) protein is Ribosome-binding factor A.